The following is a 185-amino-acid chain: Cbp/p300-interacting transactivator 4 (185 aa).

Disordered regions lie at residues 15 to 64 and 95 to 130; these read PRPP…VAYG and YPGRATMPPGAPGGPSGPQPAPGAPAPPLQPPAHAL. The span at 103–125 shows a compositional bias: pro residues; the sequence is PGAPGGPSGPQPAPGAPAPPLQP.

Belongs to the CITED family. In terms of assembly, interacts via its C-terminal region with the CH1 domain of CREBBP and EP300. Interacts with all TFAP2/AP-2 isoforms.

The protein localises to the nucleus. The protein resides in the cytoplasm. In terms of biological role, acts as a transcriptional coactivator for TFAP2/AP-2. Enhances estrogen-dependent transactivation mediated by estrogen receptors. May function as an inhibitor of transactivation by HIF1A by disrupting HIF1A interaction with CREBBP. May be involved in regulation of gene expression during development and differentiation of blood cells, endothelial cells and mammary epithelial cells. In Bos taurus (Bovine), this protein is Cbp/p300-interacting transactivator 4 (CITED4).